A 451-amino-acid polypeptide reads, in one-letter code: Chromosomal replication initiator protein DnaA (451 aa).

Residues 1-71 form a domain I, interacts with DnaA modulators region; that stretch reads MSEQEIWKKV…QTIMKDVIGY (71 aa). The tract at residues 71-112 is domain II; sequence YEVEPKFFTAEQLAELDETSRKSNTPSEPQRQIIEYGHEGTD. The interval 113 to 329 is domain III, AAA+ region; sequence QFNTHNTFDT…GALTRLLAYS (217 aa). Residues Gly-157, Gly-159, Lys-160, and Thr-161 each coordinate ATP. The interval 330–451 is domain IV, binds dsDNA; sequence KLQGRPITTE…EDLEKEIRNQ (122 aa).

It belongs to the DnaA family. As to quaternary structure, oligomerizes as a right-handed, spiral filament on DNA at oriC.

It localises to the cytoplasm. In terms of biological role, plays an essential role in the initiation and regulation of chromosomal replication. ATP-DnaA binds to the origin of replication (oriC) to initiate formation of the DNA replication initiation complex once per cell cycle. Binds the DnaA box (a 9 base pair repeat at the origin) and separates the double-stranded (ds)DNA. Forms a right-handed helical filament on oriC DNA; dsDNA binds to the exterior of the filament while single-stranded (ss)DNA is stabiized in the filament's interior. The ATP-DnaA-oriC complex binds and stabilizes one strand of the AT-rich DNA unwinding element (DUE), permitting loading of DNA polymerase. After initiation quickly degrades to an ADP-DnaA complex that is not apt for DNA replication. Binds acidic phospholipids. This Staphylococcus haemolyticus (strain JCSC1435) protein is Chromosomal replication initiator protein DnaA.